Reading from the N-terminus, the 165-residue chain is Protein SprT (165 aa).

The SprT-like domain maps to 19–163 (REKLAQANLK…RCVKCGEPLV (145 aa)). His-78 contacts Zn(2+). Residue Glu-79 is part of the active site. His-82 provides a ligand contact to Zn(2+).

This sequence belongs to the SprT family. Requires Zn(2+) as cofactor.

It localises to the cytoplasm. This is Protein SprT from Enterobacter sp. (strain 638).